The sequence spans 188 residues: Ras-related protein Rap-1 (188 aa).

10–17 (GSGGVGKS) contributes to the GTP binding site. The Effector region motif lies at 32–40 (YDPTIEDSY). Residues 57–61 (DTAGT) and 116–119 (NKCD) contribute to the GTP site.

It belongs to the small GTPase superfamily. Ras family.

The enzyme catalyses GTP + H2O = GDP + phosphate + H(+). Required in the hypodermis for proper formation of the cuticle. The chain is Ras-related protein Rap-1 (rap-1) from Caenorhabditis elegans.